Reading from the N-terminus, the 211-residue chain is ATP-dependent Clp protease proteolytic subunit (211 aa).

Catalysis depends on Ser-114, which acts as the Nucleophile. The active site involves His-139.

It belongs to the peptidase S14 family. In terms of assembly, fourteen ClpP subunits assemble into 2 heptameric rings which stack back to back to give a disk-like structure with a central cavity, resembling the structure of eukaryotic proteasomes.

The protein resides in the cytoplasm. It catalyses the reaction Hydrolysis of proteins to small peptides in the presence of ATP and magnesium. alpha-casein is the usual test substrate. In the absence of ATP, only oligopeptides shorter than five residues are hydrolyzed (such as succinyl-Leu-Tyr-|-NHMec, and Leu-Tyr-Leu-|-Tyr-Trp, in which cleavage of the -Tyr-|-Leu- and -Tyr-|-Trp bonds also occurs).. Its function is as follows. Cleaves peptides in various proteins in a process that requires ATP hydrolysis. Has a chymotrypsin-like activity. Plays a major role in the degradation of misfolded proteins. The chain is ATP-dependent Clp protease proteolytic subunit from Pseudomonas fluorescens (strain SBW25).